We begin with the raw amino-acid sequence, 775 residues long: E3 ubiquitin-protein ligase ICP0 (775 aa).

Residues 1 to 112 (MEPRPGASTR…PPREDGGSDE (112 aa)) form a disordered region. Composition is skewed to basic and acidic residues over residues 10 to 21 (RRPEGRPQREPA) and 45 to 57 (VGGR…HDDD). Positions 58–69 (SASEADSTDTEL) are enriched in acidic residues. Residue threonine 67 is modified to Phosphothreonine; by host; by CK1. The segment at 116–157 (CAVCTDEIAPHLRCDTFPCMHRFCIPCMKTWMQLRNTCPLCN) adopts an RING-type zinc-finger fold. Residues 221 to 636 (RALSPTHPEP…HAETSGAVPA (416 aa)) are disordered. Residues 231 to 243 (TTDEDDDDLDDAD) are compositionally biased toward acidic residues. Positions 258–284 (RRGAAAPPVTGGASHAAPQPAAARTAP) are enriched in low complexity. Residues 293–302 (GSSNTNTTTN) show a composition bias toward polar residues. Low complexity predominate over residues 310–321 (RQSRAAAPRGAS). Gly residues predominate over residues 322–331 (GPSGGVGVGV). A compositionally biased stretch (pro residues) spans 369–390 (PASPHRPPAAPMPGSAPRPGPP). The span at 391–409 (ASAAASGPARPRAAVAPCV) shows a compositional bias: low complexity. The segment covering 410-421 (RAPPPGPGPRAP) has biased composition (pro residues). Over residues 422-431 (APGAEPAARP) the composition is skewed to low complexity. The span at 439 to 453 (QSHSSLAQAANQEQS) shows a compositional bias: polar residues. Positions 464 to 476 (GSGGPGVEGGHGP) are enriched in gly residues. Residues 477-493 (SRGAAPSGAAPLPSAAS) show a composition bias toward low complexity. Residues 509 to 519 (GQENPSPQSTR) are compositionally biased toward polar residues. Residues 539–549 (GPGGRGQGGPG) are compositionally biased toward gly residues. The span at 550–592 (TPLTSSAASASSSSASSSSAPTPAGAASSAAGAASSSASASSG) shows a compositional bias: low complexity. Residues 617–626 (GPRKCARKTR) are compositionally biased toward basic residues.

The protein belongs to the simplexviruses ICp0 family. Interacts directly with human RCOR1/CoREST protein, leading to the disruption of the human BHC corepressor complex. Interacts with human CENPA, leading to its degradation. Interacts with human USP7; this interaction modulates ICP0 stability. Interacts with human CDC34. Interacts (when phosphorylated) with human RNF8 (via FHA domain). Interacts with human TRIM27. Interacts with human ZBP1. Interacts with host MORC3; this interaction promotes the degradation of host MORC3. Post-translationally, phosphorylated at Thr-67, leading to promote interaction with host RNF8. Phosphorylated by host CHEK2; leading to increased SUMO-targeted ubiquitin ligase activity of ICP0. In terms of processing, auto-ubiquitinated. Deubiquitinated by host USP7; leading to stabilize it.

Its subcellular location is the host cytoplasm. The protein resides in the host nucleus. The catalysed reaction is S-ubiquitinyl-[E2 ubiquitin-conjugating enzyme]-L-cysteine + [acceptor protein]-L-lysine = [E2 ubiquitin-conjugating enzyme]-L-cysteine + N(6)-ubiquitinyl-[acceptor protein]-L-lysine.. Its function is as follows. SUMO-targeted ubiquitin ligase that plays an essential role in nuclear antiviral defense evasion triggered by dsDNA viruses. Acts during the initial stages of lytic infection and the reactivation of latent viral genome. Prevents the antiviral effect of nuclear bodies by degrading host PML, SP100 and MORC3. Prevents antiviral response to viral DNA induced by IFI16 by degrading it. Additionally, inhibits host IRF3 nuclear signaling to prevent interferon production by the infected cells. Interestingly, the E3 ubiquitin ligase activity associated with the RING finger domain does not seem to be directly required to inhibit the activation of IRF3 but instead plays a critical role in modulating the cellular localization of ICP0. Upon reactivation of latent genome, suppresses the silencing of viral DNA by dissociating either HDAC1 or HDAC2 from the HDAC-RCOR1-REST-KDM1A complex localized at the ND10 structures and causes their dispersal. Two cellular histone ubiquitin ligases RNF8 and RNF168 are also targeted by ICP0 for degradation, leading to a loss of ubiquitinated forms of H2A, a relief of transcriptional repression, and the activation of latent viral genomes. Enhances the localization of host CCND3 to ND10 bodies that serve as precursors of replication compartments to enable efficient viral replication. Like many RING-finger E3 ubiquitin ligases, ICP0 can induce its own ubiquitination, an activity that promotes its instability due to its targeting to the 26S proteasome for degradation. ICP0 restricts this process by recruiting the cellular ubiquitin-specific protease USP7 that cleaves the anchored ubiquitin chains from ICP0, thereby promoting its stabilization. This Homo sapiens (Human) protein is E3 ubiquitin-protein ligase ICP0 (ICP0).